A 168-amino-acid chain; its full sequence is Phosphopantetheine adenylyltransferase (168 aa).

Residue Ser-8 coordinates substrate. ATP contacts are provided by residues 8–9 and His-16; that span reads SF. Substrate-binding residues include Lys-40, Ala-72, and Arg-86. Residues 87-89, Glu-97, and 122-128 contribute to the ATP site; these read GLR and YSFLSSS.

Belongs to the bacterial CoaD family. As to quaternary structure, homohexamer. Mg(2+) is required as a cofactor.

Its subcellular location is the cytoplasm. It carries out the reaction (R)-4'-phosphopantetheine + ATP + H(+) = 3'-dephospho-CoA + diphosphate. It functions in the pathway cofactor biosynthesis; coenzyme A biosynthesis; CoA from (R)-pantothenate: step 4/5. Its function is as follows. Reversibly transfers an adenylyl group from ATP to 4'-phosphopantetheine, yielding dephospho-CoA (dPCoA) and pyrophosphate. In Trichodesmium erythraeum (strain IMS101), this protein is Phosphopantetheine adenylyltransferase.